A 467-amino-acid chain; its full sequence is GTPase Der (467 aa).

2 consecutive EngA-type G domains span residues 3–167 (PTLV…PYEE) and 179–352 (PVIA…AAAR). GTP-binding positions include 9–16 (GRPNVGKS), 56–60 (DTGGF), 119–122 (NKTE), 185–192 (GRPNVGKS), 232–236 (DTAGL), and 297–300 (NKWD). A KH-like domain is found at 353–437 (AHIPTPKLTR…PLRVEFRTGH (85 aa)). The segment at 434 to 467 (RTGHNPYAGKKTPLTEEEARRAHSRRRRNRKKYG) is disordered. A compositionally biased stretch (basic residues) spans 455-467 (AHSRRRRNRKKYG).

The protein belongs to the TRAFAC class TrmE-Era-EngA-EngB-Septin-like GTPase superfamily. EngA (Der) GTPase family. As to quaternary structure, associates with the 50S ribosomal subunit.

Functionally, GTPase that plays an essential role in the late steps of ribosome biogenesis. This Nitrosomonas europaea (strain ATCC 19718 / CIP 103999 / KCTC 2705 / NBRC 14298) protein is GTPase Der.